The chain runs to 637 residues: Nuclear receptor-binding protein homolog (637 aa).

Residues 1–14 (MSNSQANAGISGST) are compositionally biased toward polar residues. 2 disordered regions span residues 1–60 (MSNS…TADA) and 74–99 (SEGV…ILEE). The span at 36-46 (PAATPPSQSTQ) shows a compositional bias: low complexity. Residues 88–98 (DDSEDESEILE) are compositionally biased toward acidic residues. The Protein kinase domain occupies 109–375 (REEVDQRDVP…ANDLLFHPLL (267 aa)). 2 disordered regions span residues 465 to 489 (PNFR…EPVD) and 617 to 637 (PQEQ…TTSN). Phosphoserine is present on residues S473, S479, and S482. At T484 the chain carries Phosphothreonine.

The protein belongs to the protein kinase superfamily. Ser/Thr protein kinase family.

The protein resides in the cytoplasm. The protein localises to the cell cortex. Functionally, may play a role in subcellular trafficking between the endoplasmic reticulum and Golgi apparatus. The protein is Nuclear receptor-binding protein homolog of Drosophila melanogaster (Fruit fly).